Consider the following 64-residue polypeptide: Large ribosomal subunit protein uL29 (64 aa).

This sequence belongs to the universal ribosomal protein uL29 family.

The chain is Large ribosomal subunit protein uL29 from Nitratiruptor sp. (strain SB155-2).